The chain runs to 283 residues: MPQPYIFRTVELDNQSIRTAVRPGKPHLTPLLIFNGIGANLELVFPFIEALDPDLEVIAFDVPGVGGSSTPRHPYRFPGLAKLTARMLDYLDYGQVNVIGVSWGGALAQQFAHDYPERCKKLVLAATAAGAVMVPGKPKVLWMMASPRRYVQPSHVIRIAPTIYGGGFRRDPELAMQHASKVRSGGKMGYYWQLFAGLGWTSIHWLHKIQQPTLVLAGDDDPLIPLINMRLLAWRIPNAQLHIIDDGHLFLITRAEAVAPIIMKFLQQERQRAVMHPRPASGG.

Residues 30 to 253 (PLLIFNGIGA…IDDGHLFLIT (224 aa)) enclose the AB hydrolase-1 domain. Residue S102 is the Charge relay system of the active site.

This sequence belongs to the AB hydrolase superfamily. Lipase family.

Functionally, complements a mutant that does not degrade PHA; might be a lipase. This is Poly(3-hydroxyalkanoate) depolymerase from Ectopseudomonas oleovorans (Pseudomonas oleovorans).